The sequence spans 166 residues: uncharacterized protein (166 aa).

To C.perfringens pCP13 PCP12.

This is an uncharacterized protein from Clostridium perfringens.